Reading from the N-terminus, the 362-residue chain is Phospho-N-acetylmuramoyl-pentapeptide-transferase (362 aa).

The next 10 membrane-spanning stretches (helical) occupy residues 27 to 47 (VMAA…VIRW), 73 to 93 (TMGG…WGDL), 97 to 117 (YVWV…VDDW), 132 to 152 (WKYL…GLTA), 160 to 180 (LIVP…FVAL), 200 to 220 (GLAI…AYVA), 237 to 257 (AGEL…FLWF), 264 to 284 (VFMG…VAVV), 289 to 309 (IVLF…MVQV), and 339 to 359 (QVVV…LSTL).

The protein belongs to the glycosyltransferase 4 family. MraY subfamily. It depends on Mg(2+) as a cofactor.

The protein localises to the cell inner membrane. The catalysed reaction is UDP-N-acetyl-alpha-D-muramoyl-L-alanyl-gamma-D-glutamyl-meso-2,6-diaminopimeloyl-D-alanyl-D-alanine + di-trans,octa-cis-undecaprenyl phosphate = di-trans,octa-cis-undecaprenyl diphospho-N-acetyl-alpha-D-muramoyl-L-alanyl-D-glutamyl-meso-2,6-diaminopimeloyl-D-alanyl-D-alanine + UMP. It functions in the pathway cell wall biogenesis; peptidoglycan biosynthesis. Functionally, catalyzes the initial step of the lipid cycle reactions in the biosynthesis of the cell wall peptidoglycan: transfers peptidoglycan precursor phospho-MurNAc-pentapeptide from UDP-MurNAc-pentapeptide onto the lipid carrier undecaprenyl phosphate, yielding undecaprenyl-pyrophosphoryl-MurNAc-pentapeptide, known as lipid I. In Aromatoleum aromaticum (strain DSM 19018 / LMG 30748 / EbN1) (Azoarcus sp. (strain EbN1)), this protein is Phospho-N-acetylmuramoyl-pentapeptide-transferase.